A 268-amino-acid chain; its full sequence is Zinc finger protein SNAI2 (268 aa).

Positions 1–20 (MPRSFLVKKHFNASKKPNYS) are SNAG domain. The segment at 80 to 117 (PASLGRVSPPPPSDTSSKDHSGSESPISDEEERLQSKL) is disordered. 4 C2H2-type zinc fingers span residues 128–150 (FQCNLCNKTYSTFSGLGKHKQLH), 159–181 (FSCKYCDKEYVSLGALKMHIRTH), 185–207 (CVCKICGKAFSRPWLLQGHIRTH), and 213–235 (FSCSHCSRAFADRSNLRAHLQTH). The C2H2-type 5; atypical zinc finger occupies 241-264 (YQCKSCSKTFSRMSLLHKHEESGC).

Belongs to the snail C2H2-type zinc-finger protein family. As to quaternary structure, interacts (via SNAG domain) with LIMD1 (via LIM domains), WTIP (via LIM domains) and AJUBA (via LIM domains). Interacts (via zinc fingers) with KPNA2, KPNB1, and TNPO1. May interact (via zinc fingers) with IPO7. In terms of processing, phosphorylated by GSK3B. Once phosphorylated, it becomes a target for ubiquitination. Post-translationally, ubiquitinated by the SCF(FBXO11) complex; ubiquitination requires previous GSK3B-mediated SNAI2 phosphorylation.

The protein localises to the nucleus. It localises to the cytoplasm. Functionally, transcriptional repressor that modulates both activator-dependent and basal transcription. Involved in the generation and migration of neural crest cells. Plays a role in mediating RAF1-induced transcriptional repression of the TJ protein, occludin (OCLN) and subsequent oncogenic transformation of epithelial cells. Represses BRCA2 expression by binding to its E2-box-containing silencer and recruiting CTBP1 and HDAC1 in breast cells. In epidermal keratinocytes, binds to the E-box in ITGA3 promoter and represses its transcription. Involved in the regulation of ITGB1 and ITGB4 expression and cell adhesion and proliferation in epidermal keratinocytes. Binds to E-box2 domain of BSG and activates its expression during TGFB1-induced epithelial-mesenchymal transition (EMT) in hepatocytes. Represses E-Cadherin/CDH1 transcription via E-box elements. Involved in osteoblast maturation. Binds to RUNX2 and SOC9 promoters and may act as a positive and negative transcription regulator, respectively, in osteoblasts. Binds to CXCL12 promoter via E-box regions in mesenchymal stem cells and osteoblasts. Plays an essential role in TWIST1-induced EMT and its ability to promote invasion and metastasis. In Bos taurus (Bovine), this protein is Zinc finger protein SNAI2 (SNAI2).